The sequence spans 202 residues: Protein lin-28 homolog A (202 aa).

Disordered regions lie at residues 1–33 (MPPA…GSFH) and 100–128 (SLQV…RSKG). Residues 18 to 29 (EEEEAASSEEDS) show a composition bias toward acidic residues. Residues 33-106 (HGSGVCKWFN…GLESLQVTGP (74 aa)) enclose the CSD domain. Positions 107–130 (GGAPCVGSEKKPKGTQKRRSKGDR) are flexible linker. 2 consecutive CCHC-type zinc fingers follow at residues 129-146 (DRCF…ECQL) and 151-168 (KKCH…NCPI). Residues Cys131, Cys134, His139, Cys144, Cys153, Cys156, His161, and Cys166 each coordinate Zn(2+). The tract at residues 170–202 (AQQLSPGSQGKSTTSTGEEEDMSHTPLLPESTD) is disordered. Residues 171 to 185 (QQLSPGSQGKSTTST) are compositionally biased toward polar residues. Ser174 carries the phosphoserine modification.

This sequence belongs to the lin-28 family. In terms of assembly, monomer.

Its subcellular location is the cytoplasm. It localises to the rough endoplasmic reticulum. It is found in the P-body. The protein resides in the stress granule. The protein localises to the nucleus. Its subcellular location is the nucleolus. RNA-binding protein that inhibits processing of pre-let-7 miRNAs and regulates translation of mRNAs that control developmental timing, pluripotency and metabolism. Seems to recognize a common structural G-quartet (G4) feature in its miRNA and mRNA targets. 'Translational enhancer' that drives specific mRNAs to polysomes and increases the efficiency of protein synthesis. Its association with the translational machinery and target mRNAs results in an increased number of initiation events per molecule of mRNA and, indirectly, in mRNA stabilization. Suppressor of microRNA (miRNA) biogenesis, including that of let-7. Binds specific target miRNA precursors (pre-miRNAs), recognizing an 5'-GGAG-3' motif found in their terminal loop, and recruits uridylyltransferase. This results in the terminal uridylation of target pre-miRNAs. Uridylated pre-miRNAs fail to be processed by Dicer and undergo degradation. Localized to the periendoplasmic reticulum area, binds to a large number of spliced mRNAs and inhibits the translation of mRNAs destined for the ER, reducing the synthesis of transmembrane proteins, ER or Golgi lumen proteins, and secretory proteins. Binds to and enhances the translation of mRNAs for several metabolic enzymes, increasing glycolysis and oxidative phosphorylation. Which, with the let-7 repression may enhance tissue repair in adult tissue. The sequence is that of Protein lin-28 homolog A (lin28a) from Danio rerio (Zebrafish).